The sequence spans 131 residues: D-ribose pyranase (131 aa).

His20 (proton donor) is an active-site residue. Substrate-binding positions include Asp28, His98, and 120–122 (YAN).

This sequence belongs to the RbsD / FucU family. RbsD subfamily. As to quaternary structure, homodecamer.

The protein localises to the cytoplasm. The catalysed reaction is beta-D-ribopyranose = beta-D-ribofuranose. Its pathway is carbohydrate metabolism; D-ribose degradation; D-ribose 5-phosphate from beta-D-ribopyranose: step 1/2. Functionally, catalyzes the interconversion of beta-pyran and beta-furan forms of D-ribose. This is D-ribose pyranase from Clostridium tetani (strain Massachusetts / E88).